Reading from the N-terminus, the 359-residue chain is tRNA/tmRNA (uracil-C(5))-methyltransferase (359 aa).

S-adenosyl-L-methionine is bound by residues Gln183, Tyr211, Asn216, Glu232, and Asp292. The Nucleophile role is filled by Cys317. Residue Glu351 is the Proton acceptor of the active site.

Belongs to the class I-like SAM-binding methyltransferase superfamily. RNA M5U methyltransferase family. TrmA subfamily.

It catalyses the reaction uridine(54) in tRNA + S-adenosyl-L-methionine = 5-methyluridine(54) in tRNA + S-adenosyl-L-homocysteine + H(+). The enzyme catalyses uridine(341) in tmRNA + S-adenosyl-L-methionine = 5-methyluridine(341) in tmRNA + S-adenosyl-L-homocysteine + H(+). Dual-specificity methyltransferase that catalyzes the formation of 5-methyluridine at position 54 (m5U54) in all tRNAs, and that of position 341 (m5U341) in tmRNA (transfer-mRNA). This chain is tRNA/tmRNA (uracil-C(5))-methyltransferase, found in Pseudomonas fluorescens (strain ATCC BAA-477 / NRRL B-23932 / Pf-5).